A 276-amino-acid polypeptide reads, in one-letter code: uncharacterized protein (276 aa).

Residue tyrosine 47 is the Proton donor of the active site. Histidine 110 is a substrate binding site.

The protein belongs to the aldo/keto reductase family.

It localises to the cytoplasm. It is found in the nucleus. This is an uncharacterized protein from Schizosaccharomyces pombe (strain 972 / ATCC 24843) (Fission yeast).